The following is a 501-amino-acid chain: CUGBP Elav-like family member 1 (501 aa).

A binds strongly to URE region spans residues 2–196; the sequence is NGSLDHPDQP…DTQKDKEQKR (195 aa). RRM domains follow at residues 16–99 and 108–188; these read IKMF…PADS and RKLF…FADT. Composition is skewed to low complexity over residues 274–298 and 312–323; these read PTGSSALTTSSSPLSVLTSSGTPSG and SSPTSSTSSSVN. The interval 274-323 is disordered; the sequence is PTGSSALTTSSSPLSVLTSSGTPSGQPAQSAWDAYKAGSSPTSSTSSSVN. A binds strongly to URE region spans residues 397–501; it reads LLSQQNVSAA…KRSKNDSKPY (105 aa). Residues 416–494 enclose the RRM 3 domain; it reads ANLFIYHLPQ…KRLKVQLKRS (79 aa).

This sequence belongs to the CELF/BRUNOL family.

The protein localises to the nucleus. Its subcellular location is the cytoplasm. RNA-binding protein implicated in the regulation of several post-transcriptional events. May be involved in mRNA translation activation and stability. Involved in the regulation of muscle-specific splicing of alpha actinin pre-mRNAs via the binding to the UR-repeat element (URE) at the branch point of the non-muscle (NM) exon. This chain is CUGBP Elav-like family member 1 (celf1), found in Danio rerio (Zebrafish).